Here is a 294-residue protein sequence, read N- to C-terminus: MKKPFNVLAIIGKPRDQQAIQTHKEIYHWLRSLGYTVFIDDRLREILTDLPTEHFASLIELGKKADLAIVVGGDGNMLGAARVLSRFDISVIGVNRGNLGFLTDLNPEDFQQRLQEVLDGHYLQETRFLLEAEIHRHGQVKSHNAALNEAVLHPGKIAHMIEFEVYIDDNFAFSQRSDGLIVSTPTGSTAYSLSGGGPILSPSLNAITLVPMFPHTLSCRPLVVGGNQRIKLVVSPENRGTQEVSCDGQVSLPVSPGDEIHIYQSPNVLKLIHPQDYSYYHVLRTKLGWSSKLF.

The active-site Proton acceptor is the Asp74. Residues 74 to 75, 148 to 149, His159, Arg176, Asp178, 189 to 194, and Gln249 each bind NAD(+); these read DG, NE, and TAYSLS.

The protein belongs to the NAD kinase family. The cofactor is a divalent metal cation.

The protein resides in the cytoplasm. The enzyme catalyses NAD(+) + ATP = ADP + NADP(+) + H(+). Its function is as follows. Involved in the regulation of the intracellular balance of NAD and NADP, and is a key enzyme in the biosynthesis of NADP. Catalyzes specifically the phosphorylation on 2'-hydroxyl of the adenosine moiety of NAD to yield NADP. The protein is NAD kinase of Vibrio cholerae serotype O1 (strain ATCC 39541 / Classical Ogawa 395 / O395).